Here is an 805-residue protein sequence, read N- to C-terminus: Leucine--tRNA ligase (805 aa).

The 'HIGH' region motif lies at 40–51 (PYPSGAGLHVGH). Residues 576-580 (KMSKS) carry the 'KMSKS' region motif. Residue lysine 579 participates in ATP binding.

It belongs to the class-I aminoacyl-tRNA synthetase family.

The protein localises to the cytoplasm. The enzyme catalyses tRNA(Leu) + L-leucine + ATP = L-leucyl-tRNA(Leu) + AMP + diphosphate. In Anoxybacillus flavithermus (strain DSM 21510 / WK1), this protein is Leucine--tRNA ligase.